A 91-amino-acid chain; its full sequence is Small ribosomal subunit protein bS6 (91 aa).

Belongs to the bacterial ribosomal protein bS6 family.

Binds together with bS18 to 16S ribosomal RNA. In Leptospira biflexa serovar Patoc (strain Patoc 1 / Ames), this protein is Small ribosomal subunit protein bS6.